The chain runs to 151 residues: Abdominal ganglion neuropeptide L11 (151 aa).

A signal peptide spans 1–25 (MPCTPNSHRLLLVTALCLLITSLFA).

It is found in the secreted. The sequence is that of Abdominal ganglion neuropeptide L11 from Aplysia californica (California sea hare).